An 822-amino-acid chain; its full sequence is DNA-directed RNA polymerase subunit beta N-terminal section (822 aa).

Positions Glu376–Gly408 are disordered. The segment covering Ser383 to Ser393 has biased composition (low complexity).

This sequence belongs to the RNA polymerase beta chain family. In terms of assembly, in plastids the minimal PEP RNA polymerase catalytic core is composed of four subunits: alpha, beta, beta', and beta''. When a (nuclear-encoded) sigma factor is associated with the core the holoenzyme is formed, which can initiate transcription.

Its subcellular location is the plastid. It is found in the chloroplast. The catalysed reaction is RNA(n) + a ribonucleoside 5'-triphosphate = RNA(n+1) + diphosphate. Functionally, DNA-dependent RNA polymerase catalyzes the transcription of DNA into RNA using the four ribonucleoside triphosphates as substrates. In Chlamydomonas reinhardtii (Chlamydomonas smithii), this protein is DNA-directed RNA polymerase subunit beta N-terminal section (rpoB1).